A 125-amino-acid chain; its full sequence is Small ribosomal subunit protein uS12m (125 aa).

Belongs to the universal ribosomal protein uS12 family.

The protein localises to the mitochondrion. Its function is as follows. Protein S12 is involved in the translation initiation step. The chain is Small ribosomal subunit protein uS12m (RPS12) from Brassica napus (Rape).